The primary structure comprises 148 residues: Ferredoxin-thioredoxin reductase catalytic chain, chloroplastic (148 aa).

The transit peptide at 1–35 (MKALQASTSYSFFSKSSSATLQRRTHRPQCVILSK) directs the protein to the chloroplast. Cys-87 serves as a coordination point for [4Fe-4S] cluster. Cys-89 serves as the catalytic Nucleophile. A disulfide bridge links Cys-89 with Cys-119. [4Fe-4S] cluster-binding residues include Cys-106, Cys-108, and Cys-117.

The protein belongs to the ferredoxin thioredoxin reductase beta subunit family. As to quaternary structure, heterodimer of subunit A (variable subunit) and subunit B (catalytic subunit). Heterodimeric FTR forms a complex with ferredoxin and thioredoxin. It depends on [4Fe-4S] cluster as a cofactor.

The protein localises to the plastid. Its subcellular location is the chloroplast. It catalyses the reaction [thioredoxin]-disulfide + 2 reduced [2Fe-2S]-[ferredoxin] + 2 H(+) = [thioredoxin]-dithiol + 2 oxidized [2Fe-2S]-[ferredoxin]. Its function is as follows. Catalytic subunit of the ferredoxin-thioredoxin reductase (FTR), which catalyzes the two-electron reduction of thioredoxins by the electrons provided by reduced ferredoxin. This Spinacia oleracea (Spinach) protein is Ferredoxin-thioredoxin reductase catalytic chain, chloroplastic.